Here is a 356-residue protein sequence, read N- to C-terminus: Methionine import ATP-binding protein MetN 1 (356 aa).

Residues 2-241 (IELKNISVTF…PQQPLTKDFI (240 aa)) enclose the ABC transporter domain. 38–45 (GYSGAGKS) contributes to the ATP binding site.

Belongs to the ABC transporter superfamily. Methionine importer (TC 3.A.1.24) family. The complex is composed of two ATP-binding proteins (MetN), two transmembrane proteins (MetI) and a solute-binding protein (MetQ).

It localises to the cell membrane. The enzyme catalyses L-methionine(out) + ATP + H2O = L-methionine(in) + ADP + phosphate + H(+). The catalysed reaction is D-methionine(out) + ATP + H2O = D-methionine(in) + ADP + phosphate + H(+). Functionally, part of the ABC transporter complex MetNIQ involved in methionine import. Responsible for energy coupling to the transport system. This Enterococcus faecalis (strain ATCC 700802 / V583) protein is Methionine import ATP-binding protein MetN 1.